We begin with the raw amino-acid sequence, 614 residues long: Probable zinc transporter protein DDB_G0269332 (614 aa).

Disordered stretches follow at residues 1 to 103 and 115 to 178; these read MSDI…LPHL and SSYN…NNEF. Residues 1-203 are Cytoplasmic-facing; the sequence is MSDINSNSYD…NLNRDSDAKK (203 aa). The span at 17–64 shows a compositional bias: low complexity; it reads QHQQESQYHPQQQQQQQQQQQQQQEYYNQQHQQESQYQQQSPPQQQYD. The span at 80-92 shows a compositional bias: basic residues; the sequence is GHGRSHNSGHGHS. Residues 121–176 show a composition bias toward low complexity; it reads NNSGDISNSNNNNNNNNQYNYNNNNNNNNYNNNINNNQFNSSVYNNNNNNNNNNNN. Residues 204-224 traverse the membrane as a helical segment; that stretch reads LAAWISVMLVFTIYEIFYGAY. Residues 225–233 are Extracellular-facing; the sequence is LESLGLVSD. A helical transmembrane segment spans residues 234-254; sequence GFHALFDCIGMGIALLAMLVG. Topologically, residues 255–270 are cytoplasmic; that stretch reads KRGISNQEYTYGYDRW. Residues 271 to 291 traverse the membrane as a helical segment; it reads EVLGTFSNGCFLLFVSFFLFL. At 292-306 the chain is on the extracellular side; it reads ESIERLLEPPHIHNH. Residues 307–327 traverse the membrane as a helical segment; it reads GRVMSLATISLIINIVGVLFF. The Cytoplasmic segment spans residues 328–351; the sequence is KQKSNERKQQSSIRSENLLTISHH. The helical transmembrane segment at 352–372 threads the bilayer; that stretch reads ILVDSCTSLGVILSSLVGQAF. Residues 373-377 lie on the Extracellular side of the membrane; that stretch reads GLEIS. A helical transmembrane segment spans residues 378-398; the sequence is DSLISIIIACIIVYNALPICI. The Cytoplasmic segment spans residues 399–614; sequence KTSAILLQTT…NSSHSHAHNH (216 aa). A disordered region spans residues 483-614; that stretch reads EGKHNSHSHG…NSSHSHAHNH (132 aa). 2 stretches are compositionally biased toward basic residues: residues 487-499 and 507-523; these read NSHS…HHPH and SHNH…HGHS. Residues 525–535 are compositionally biased toward basic and acidic residues; the sequence is GGNDDHEHGEN. Residues 548 to 567 show a composition bias toward polar residues; the sequence is VQPTSPFSSHYTDIHSNNTP. Residues 575 to 585 show a composition bias toward acidic residues; the sequence is QDDEDDEDDYD. Residues 586-599 show a composition bias toward basic and acidic residues; it reads HDEHHHDHDHDEHH. The segment covering 600–614 has biased composition (basic residues); the sequence is HGHSHNSSHSHAHNH.

Belongs to the cation diffusion facilitator (CDF) transporter (TC 2.A.4) family. SLC30A subfamily.

It localises to the membrane. May be involved in zinc transport from the cytoplasm to either intracellular organelles or extracellular spaces. The sequence is that of Probable zinc transporter protein DDB_G0269332 from Dictyostelium discoideum (Social amoeba).